A 634-amino-acid chain; its full sequence is Chaperone protein HtpG (634 aa).

The tract at residues 1–342 (MTVETDKQTL…SSDLSLNVSR (342 aa)) is a; substrate-binding. The tract at residues 343–559 (EILQSGPVVD…QGDLGLQMRQ (217 aa)) is b. Positions 560–634 (LLEASGQAVP…LNKLLLELSV (75 aa)) are c.

It belongs to the heat shock protein 90 family. In terms of assembly, homodimer.

The protein resides in the cytoplasm. Molecular chaperone. Has ATPase activity. The protein is Chaperone protein HtpG of Xanthomonas euvesicatoria pv. vesicatoria (strain 85-10) (Xanthomonas campestris pv. vesicatoria).